A 136-amino-acid polypeptide reads, in one-letter code: uncharacterized protein (136 aa).

An N-terminal signal peptide occupies residues 1-19 (MKKLLMVILGIALIGMAYA).

This is an uncharacterized protein from Methanocaldococcus jannaschii (strain ATCC 43067 / DSM 2661 / JAL-1 / JCM 10045 / NBRC 100440) (Methanococcus jannaschii).